The sequence spans 241 residues: Lysoplasmalogenase TMEM86A (241 aa).

Topologically, residues 1 to 13 are cytoplasmic; sequence MVSPVTVVKSEGP. The helical transmembrane segment at 14–30 threads the bilayer; it reads KLVPFFKATCVYFVLWL. The Extracellular segment spans residues 31 to 36; it reads PSSSPS. Residues 37–59 form a helical membrane-spanning segment; it reads WVSALIKCLPIFCLWLFLLAHGV. The Cytoplasmic portion of the chain corresponds to 60 to 67; it reads RFLLAHPS. Residues 68–87 traverse the membrane as a helical segment; that stretch reads ASLIFVGLVFSAVGDAFLIW. Residues 88–96 lie on the Extracellular side of the membrane; sequence QDHGYFEHG. Residues 97 to 113 traverse the membrane as a helical segment; it reads LLMFAVAHILYAAAFGM. Topologically, residues 114-119 are cytoplasmic; the sequence is RPLALR. The helical transmembrane segment at 120–136 threads the bilayer; that stretch reads TGLVIGVLSGLCYALLY. At 137–142 the chain is on the extracellular side; that stretch reads PGLSGA. A helical transmembrane segment spans residues 143-159; the sequence is FTYLVGVYVALISFMGW. Topologically, residues 160 to 176 are cytoplasmic; it reads RAMAGLRLVGAAWRWTE. The helical transmembrane segment at 177–195 threads the bilayer; sequence LAAGGGALLFILSDLTIAL. At 196–206 the chain is on the extracellular side; it reads NKFCFPVPYSR. Residues 207–225 traverse the membrane as a helical segment; that stretch reads ALIMSTYYAAQMLIALSAV. At 226–241 the chain is on the cytoplasmic side; the sequence is ESREPVGEDYRLSKAD.

This sequence belongs to the TMEM86 family. In terms of tissue distribution, highly expressed in the jejunum, white adipose tissue, kidney and macrophages.

It localises to the endoplasmic reticulum membrane. It catalyses the reaction a 1-O-(1Z-alkenyl)-sn-glycero-3-phosphocholine + H2O = a 2,3-saturated aldehyde + sn-glycerol 3-phosphocholine. It carries out the reaction a 1-O-(1Z-alkenyl)-sn-glycero-3-phosphoethanolamine + H2O = a 2,3-saturated aldehyde + sn-glycero-3-phosphoethanolamine. Functionally, catalyzes the hydrolysis of the vinyl ether bond of choline or ethanolamine lysoplasmalogens, forming fatty aldehyde and glycerophosphocholine or glycerophosphoethanolamine, respectively and is specific for the sn-2-deacylated (lyso) form of plasmalogen. Plays an important role in lysoplasmalogen metabolism in the adipocyte tissue and macrophages. The polypeptide is Lysoplasmalogenase TMEM86A (Tmem86a) (Mus musculus (Mouse)).